Here is a 141-residue protein sequence, read N- to C-terminus: Hemoglobin subunit alpha (141 aa).

A Globin domain is found at 1–141 (VLSAADKTNV…VSTVLTSKYR (141 aa)). Serine 3 is subject to Phosphoserine. Residue lysine 7 is modified to N6-succinyllysine. Position 8 is a phosphothreonine (threonine 8). N6-succinyllysine is present on lysine 11. At lysine 16 the chain carries N6-acetyllysine; alternate. Lysine 16 is subject to N6-succinyllysine; alternate. Serine 35 is subject to Phosphoserine. Position 40 is an N6-succinyllysine (lysine 40). Position 49 is a phosphoserine (serine 49). O2 is bound at residue histidine 58. A heme b-binding site is contributed by histidine 87. A Phosphoserine modification is found at serine 102. A Phosphothreonine modification is found at threonine 108. Residues serine 124 and serine 131 each carry the phosphoserine modification. A phosphothreonine mark is found at threonine 134 and threonine 137. Serine 138 carries the phosphoserine modification.

Belongs to the globin family. As to quaternary structure, heterotetramer of two alpha chains and two beta chains. In terms of tissue distribution, red blood cells.

In terms of biological role, involved in oxygen transport from the lung to the various peripheral tissues. The chain is Hemoglobin subunit alpha from Sciurus carolinensis (Eastern gray squirrel).